Here is a 180-residue protein sequence, read N- to C-terminus: Small ribosomal subunit protein uS5 (180 aa).

The tract at residues 1–26 (MAEEKDKKQSSRRRNNRRTEKESEWQ) is disordered. The segment covering 17–26 (RRTEKESEWQ) has biased composition (basic and acidic residues). In terms of domain architecture, S5 DRBM spans 25-88 (WQERVVQIRR…ADGKKHLVNV (64 aa)).

It belongs to the universal ribosomal protein uS5 family. Part of the 30S ribosomal subunit. Contacts proteins S4 and S8.

In terms of biological role, with S4 and S12 plays an important role in translational accuracy. Its function is as follows. Located at the back of the 30S subunit body where it stabilizes the conformation of the head with respect to the body. This is Small ribosomal subunit protein uS5 from Synechococcus elongatus (strain ATCC 33912 / PCC 7942 / FACHB-805) (Anacystis nidulans R2).